Reading from the N-terminus, the 754-residue chain is Phosphatase and actin regulator 4B (754 aa).

Over residues 1 to 12 the composition is skewed to basic and acidic residues; sequence MENRDDEVEHQH. 4 disordered regions span residues 1–38, 83–105, 120–625, and 637–666; these read MENR…FSTL, KELP…KNGH, VHSP…SKEQ, and LTRR…DRQA. Residues 61-86 form an RPEL 1 repeat; the sequence is EVLERKMSMRRPRQELIEQGVLKELP. 3 stretches are compositionally biased toward basic and acidic residues: residues 138–153, 184–221, and 229–241; these read PEDR…DHRG, HGED…EPDW, and SSVE…RESD. 2 stretches are compositionally biased toward low complexity: residues 296-307 and 316-333; these read SFCSSNSSSSSS and SSAG…LTTS. 4 stretches are compositionally biased toward pro residues: residues 348–357, 381–390, 427–445, and 460–478; these read KQPPMPPPKP, KPSPPMPPKR, LPPP…PSPP, and YPLP…PPED. Acidic residues-rich tracts occupy residues 483-503, 541-557, and 566-576; these read DEDD…DEEP, SEEE…ESDS, and DESDEDEEDDS. A compositionally biased stretch (basic and acidic residues) spans 605–615; the sequence is QAPERQAKSEH. RPEL repeat units follow at residues 635-660 and 673-698; these read TALT…QPKN and RRLT…RFHE. Serine 642 is modified (phosphoserine).

Belongs to the phosphatase and actin regulator family. In terms of assembly, binds ppp1ca and actin.

It localises to the cytoplasm. The protein resides in the cell projection. It is found in the lamellipodium. Regulator of protein phosphatase 1 (PP1) required for neural tube and optic fissure closure, and enteric neural crest cell (ENCCs) migration during development. Acts as an activator of PP1. During neural tube closure, localizes to the ventral neural tube and activates PP1, leading to down-regulate cell proliferation within cranial neural tissue and the neural retina. Also acts as a regulator of migration of enteric neural crest cells (ENCCs) by activating PP1, leading to repression of the integrin signaling through the rho/rock pathway. The sequence is that of Phosphatase and actin regulator 4B (phactr4b) from Danio rerio (Zebrafish).